The primary structure comprises 176 residues: Peptide deformylase (176 aa).

C97 and H139 together coordinate Fe cation. The active site involves E140. Position 143 (H143) interacts with Fe cation.

Belongs to the polypeptide deformylase family. Fe(2+) serves as cofactor.

It carries out the reaction N-terminal N-formyl-L-methionyl-[peptide] + H2O = N-terminal L-methionyl-[peptide] + formate. In terms of biological role, removes the formyl group from the N-terminal Met of newly synthesized proteins. Requires at least a dipeptide for an efficient rate of reaction. N-terminal L-methionine is a prerequisite for activity but the enzyme has broad specificity at other positions. In Thermomicrobium roseum (strain ATCC 27502 / DSM 5159 / P-2), this protein is Peptide deformylase.